A 109-amino-acid polypeptide reads, in one-letter code: Putative antitoxin HigA3 (109 aa).

An HTH cro/C1-type domain is found at leucine 41–valine 97. The H-T-H motif DNA-binding region spans glutamine 53 to serine 72.

In terms of biological role, putative antitoxin component of a type II toxin-antitoxin (TA) system. Its cognate toxin would be HigB3. This is Putative antitoxin HigA3 from Mycobacterium tuberculosis (strain ATCC 25618 / H37Rv).